A 345-amino-acid polypeptide reads, in one-letter code: Guanine nucleotide-binding protein G(i) subunit alpha-3 (345 aa).

The G-alpha domain maps to 23 to 345 (KEVKLLLLGA…KSNLMECGLY (323 aa)). The G1 motif stretch occupies residues 26-39 (KLLLLGAGESGKST). The GTP site is built by Gly-33, Glu-34, Ser-35, Gly-36, Lys-37, Ser-38, Thr-39, Asp-141, Ser-142, Leu-166, Arg-167, Thr-168, Arg-169, Val-170, Lys-171, Thr-172, Val-192, Gly-194, Asn-260, Lys-261, Asp-263, Leu-264, Cys-316, Ala-317, and Thr-318. Ser-38 serves as a coordination point for Mg(2+). The G2 motif stretch occupies residues 164–172 (DVLRTRVKT). A Mg(2+)-binding site is contributed by Thr-172. The segment at 187 to 196 (FKMFDVGGQR) is G3 motif. The G4 motif stretch occupies residues 256 to 263 (ILFLNKKD). The G5 motif stretch occupies residues 315-320 (TCATDT).

Belongs to the G-alpha family. G(i/o/t/z) subfamily. Heterotrimeric G proteins are composed of 3 units; alpha, beta and gamma. The alpha subunit contains the guanine nucleotide binding site. GTP binding causes dissociation of the heterotrimer, liberating the individual subunits so that they can interact with downstream effector proteins.

The protein localises to the cytoplasm. Its subcellular location is the cell membrane. It localises to the cytoskeleton. The protein resides in the microtubule organizing center. It is found in the centrosome. The protein localises to the membrane. Heterotrimeric guanine nucleotide-binding proteins (G proteins) function as transducers downstream of G protein-coupled receptors (GPCRs) in numerous signaling cascades. The alpha chain contains the guanine nucleotide binding site and alternates between an active, GTP-bound state and an inactive, GDP-bound state. Signaling by an activated GPCR promotes GDP release and GTP binding. The alpha subunit has a low GTPase activity that converts bound GTP to GDP, thereby terminating the signal. Both GDP release and GTP hydrolysis are modulated by numerous regulatory proteins. Signaling is mediated via effector proteins, such as adenylate cyclase. Inhibits adenylate cyclase activity, leading to decreased intracellular cAMP levels. Stimulates the activity of receptor-regulated K(+) channels. The active GTP-bound form prevents the association of RGS14 with centrosomes and is required for the translocation of RGS14 from the cytoplasm to the plasma membrane. May play a role in cell division. The active GTP-bound form activates the calcium permeant TRPC5 ion channels. The chain is Guanine nucleotide-binding protein G(i) subunit alpha-3 (gnai3) from Xenopus laevis (African clawed frog).